A 414-amino-acid chain; its full sequence is Sec-independent protein translocase protein TatC (414 aa).

The interval 1 to 21 (MTQSTSVSKGGRVSRKAKKNP) is disordered. 6 consecutive transmembrane segments (helical) span residues 45–65 (IAVT…AWAI), 119–139 (GGLA…WRFI), 157–177 (IAGF…PMGL), 200–220 (FVIA…FTAM), 238–258 (IMIV…DPIS), and 259–279 (MLVL…FTRI). The segment at 315 to 414 (IYDGDHKGIA…IQSSSFDDVL (100 aa)) is disordered. Residues 323-336 (IAGGGDAHPAGGSG) are compositionally biased toward gly residues. Low complexity predominate over residues 345–357 (TAPTRAPSASESP). Polar residues predominate over residues 403–414 (DTIQSSSFDDVL).

Belongs to the TatC family. In terms of assembly, the Tat system comprises two distinct complexes: a TatABC complex, containing multiple copies of TatA, TatB and TatC subunits, and a separate TatA complex, containing only TatA subunits. Substrates initially bind to the TatABC complex, which probably triggers association of the separate TatA complex to form the active translocon.

The protein resides in the cell membrane. Part of the twin-arginine translocation (Tat) system that transports large folded proteins containing a characteristic twin-arginine motif in their signal peptide across membranes. Together with TatB, TatC is part of a receptor directly interacting with Tat signal peptides. This chain is Sec-independent protein translocase protein TatC, found in Corynebacterium kroppenstedtii (strain DSM 44385 / JCM 11950 / CIP 105744 / CCUG 35717).